The primary structure comprises 1128 residues: MSSNLSIDERWKVIEAYFKSKGLVRQHLDSYNDFVRNKLQEIIDEQGEIPTEIPGLKVRLGKIRIGKPRVRESDRGEREISPMEARLRNLTYAAPLWLTMIPVENNIEAEPEEVYIGDLPIMLKSAIDPISQYTLDKLIEIGEDPKDPGGYFIVNGSERVIVTQEDLAPNRVLVDTGKTGSNITHTAKIISSTAGYRVPVTIERLKDGTFHVSFPAVPGKIPFVILMRALGILTDRDIVYAVSLDPEIQNELFPSLEQASSIANVDDALDFIGSRVAIGQKRENRIEKAQQIIDKYFLPHLGTSADDRRKKAYYLAYAISKVIELYLGRREPDDKDHYANKRLRLAGDLFASLFRVAFKAFVKDLTYQLEKSKVRGRKLALKALVRPDIVTERIRHALATGNWVGGRTGVSQLLDRTNWLSMLSHLRRVISSLARGQPNFEARDLHGTQWGRMCPFETPEGPNSGLVKNLALMAQIAVGINEKIVEKTLYEMGVVPVEEVIRRVTEGGEDQNEYLKWSKVILNGRLVGYYRDGEELAKKIRERRRKGEISDEVNVGHIVTDFINEVHVNCDSGRVRRPLIIVSNGNPLVTREDIEKLDSGSITFDDLVRQGKIEYLDAEEEENAYVALEPSDLTPEHTHLEIWSPAILGITASIIPYPEHNQSPRNTYQSAMAKQALGLYAANYQLRTDTRAHLLHYPQRPLVQTRALDIIGYTNRPAGNNAILAVISFTGYNMEDSIIMNRSSVERGMYRSTFFRLYSTEEVKYPGGQEDKIVMPEPGVRGYKGKEYYRLLEDNGVVSPEVEVKGGDVLIGKVSPPRFLQEFKELSPEQAKRDTSIVTRHGEMGIVDLVLITETAEGNKLVKVRVRDLRIPSIGDKFASRHGQKGVIGMLIPQVDMPYTVKGVVPDVILNPHALPSRMTLGQIMEGIAGKYAALSGNIVDATPFYKTPIEQLQNEILKYGYLPDATEVTYDGRTGQKIKSRIYFGVVYYQKLHHMVADKIHARARGPVQILTRQPTEGRAREGGLRFGEMERDCLIGFGTAMLLKDRLLDNSDRTTIYVCDQCGYIGWYDKNKNKYVCPIHGDKSNLFPVTVSYAFKLLIQELMSMIISPRLILEDRVGLSGGKGNE.

Residues Lys178, 181 to 182 (SN), Lys206, 435 to 439 (RGQPN), and 1027 to 1032 (RFGEME) contribute to the dsDNA site. Zn(2+) contacts are provided by Cys1061, Cys1064, Cys1079, and His1082.

This sequence belongs to the RNA polymerase beta chain family. Part of the 13-subunit RNA polymerase complex. The cofactor is Zn(2+).

The protein resides in the cytoplasm. It catalyses the reaction RNA(n) + a ribonucleoside 5'-triphosphate = RNA(n+1) + diphosphate. Functionally, DNA-dependent RNA polymerase (RNAP) catalyzes the transcription of DNA into RNA using the four ribonucleoside triphosphates as substrates. This subunit is involved in DNA promoter recognition. This is DNA-directed RNA polymerase subunit Rpo2 from Saccharolobus shibatae (strain ATCC 51178 / DSM 5389 / JCM 8931 / NBRC 15437 / B12) (Sulfolobus shibatae).